The following is a 90-amino-acid chain: MGGASIWHWIVVGVIVMLLFGRGKVSELMGDVAKGIKAFKKGMADEDQPQAPVANQSPPPVSATEPVRTLPPHQGEPAPAANASVDRKVG.

Residues 1 to 21 (MGGASIWHWIVVGVIVMLLFG) traverse the membrane as a helical segment. The tract at residues 42-90 (GMADEDQPQAPVANQSPPPVSATEPVRTLPPHQGEPAPAANASVDRKVG) is disordered.

This sequence belongs to the TatA/E family. The Tat system comprises two distinct complexes: a TatABC complex, containing multiple copies of TatA, TatB and TatC subunits, and a separate TatA complex, containing only TatA subunits. Substrates initially bind to the TatABC complex, which probably triggers association of the separate TatA complex to form the active translocon.

Its subcellular location is the cell inner membrane. Its function is as follows. Part of the twin-arginine translocation (Tat) system that transports large folded proteins containing a characteristic twin-arginine motif in their signal peptide across membranes. TatA could form the protein-conducting channel of the Tat system. This chain is Sec-independent protein translocase protein TatA, found in Methylobacterium nodulans (strain LMG 21967 / CNCM I-2342 / ORS 2060).